Consider the following 114-residue polypeptide: UPF0342 protein NT01CX_2274 (114 aa).

The protein belongs to the UPF0342 family.

The polypeptide is UPF0342 protein NT01CX_2274 (Clostridium novyi (strain NT)).